A 132-amino-acid chain; its full sequence is D-ribose pyranase (132 aa).

His20 serves as the catalytic Proton donor. Residues Asp28, His99, and 121-123 (YAN) contribute to the substrate site.

It belongs to the RbsD / FucU family. RbsD subfamily. In terms of assembly, homodecamer.

It is found in the cytoplasm. It carries out the reaction beta-D-ribopyranose = beta-D-ribofuranose. It participates in carbohydrate metabolism; D-ribose degradation; D-ribose 5-phosphate from beta-D-ribopyranose: step 1/2. Functionally, catalyzes the interconversion of beta-pyran and beta-furan forms of D-ribose. This Variovorax paradoxus (strain S110) protein is D-ribose pyranase.